The chain runs to 166 residues: Mitochondrial translation release factor in rescue (166 aa).

The transit peptide at 1–35 directs the protein to the mitochondrion; sequence MSTVGLFHFPTPLTRICPAPWGLRLWEKLTLLSPG. The tract at residues 57-121 is GGQ domain; sequence ENELEEQFVK…LQEKVDVFYN (65 aa). A GGQ motif is present at residues 71 to 73; the sequence is GGQ. Gln-73 is subject to N5-methylglutamine. Residues 122-148 form a disordered region; sequence GENSPVHKEKREAAKKKQERKKRAKET. Over residues 126 to 137 the composition is skewed to basic and acidic residues; that stretch reads PVHKEKREAAKK. Residues 127 to 160 adopt a coiled-coil conformation; the sequence is VHKEKREAAKKKQERKKRAKETLEKKKLLKELWE.

The protein belongs to the prokaryotic/mitochondrial release factor family. Interacts (via C-terminus) with MTRES1 (via S4 domain). Associates with mitoribosomal S39 large subunit, peptidyl tRNA and nascent chain. Post-translationally, methylation of glutamine in the GGQ triplet by HEMK1. As to expression, expressed in all areas of the brain tested.

The protein localises to the mitochondrion. Its function is as follows. Part of a mitoribosome-associated quality control pathway that prevents aberrant translation by responding to interruptions during elongation. As heterodimer with MTRES1, ejects the unfinished nascent chain and peptidyl transfer RNA (tRNA), respectively, from stalled ribosomes. Recruitment of mitoribosome biogenesis factors to these quality control intermediates suggests additional roles for MTRES1 and MTRF during mitoribosome rescue. In Homo sapiens (Human), this protein is Mitochondrial translation release factor in rescue.